Reading from the N-terminus, the 467-residue chain is Glutamate--tRNA ligase (467 aa).

The 'HIGH' region motif lies at 9 to 19 (PSPTGNLHIGS). The short motif at 237 to 241 (KISKR) is the 'KMSKS' region element. K240 is a binding site for ATP.

The protein belongs to the class-I aminoacyl-tRNA synthetase family. Glutamate--tRNA ligase type 1 subfamily. As to quaternary structure, monomer.

It localises to the cytoplasm. The catalysed reaction is tRNA(Glu) + L-glutamate + ATP = L-glutamyl-tRNA(Glu) + AMP + diphosphate. Functionally, catalyzes the attachment of glutamate to tRNA(Glu) in a two-step reaction: glutamate is first activated by ATP to form Glu-AMP and then transferred to the acceptor end of tRNA(Glu). The polypeptide is Glutamate--tRNA ligase (Buchnera aphidicola subsp. Acyrthosiphon pisum (strain APS) (Acyrthosiphon pisum symbiotic bacterium)).